Here is a 543-residue protein sequence, read N- to C-terminus: Lipoyl synthase, apicoplast (543 aa).

The N-terminal stretch at 1 to 63 (MAYFFDFPTD…LFSLLSASQS (63 aa)) is a signal peptide. [4Fe-4S] cluster is bound by residues C252, C257, C263, C278, C282, C285, and S493. Residues 264–482 (WNGGTATLIL…QDIAEEMGFK (219 aa)) form the Radical SAM core domain.

Belongs to the radical SAM superfamily. Lipoyl synthase family. It depends on [4Fe-4S] cluster as a cofactor.

The protein resides in the plastid. The protein localises to the apicoplast. It carries out the reaction [[Fe-S] cluster scaffold protein carrying a second [4Fe-4S](2+) cluster] + N(6)-octanoyl-L-lysyl-[protein] + 2 oxidized [2Fe-2S]-[ferredoxin] + 2 S-adenosyl-L-methionine + 4 H(+) = [[Fe-S] cluster scaffold protein] + N(6)-[(R)-dihydrolipoyl]-L-lysyl-[protein] + 4 Fe(3+) + 2 hydrogen sulfide + 2 5'-deoxyadenosine + 2 L-methionine + 2 reduced [2Fe-2S]-[ferredoxin]. Its pathway is protein modification; protein lipoylation via endogenous pathway; protein N(6)-(lipoyl)lysine from octanoyl-[acyl-carrier-protein]: step 2/2. Its function is as follows. Catalyzes the radical-mediated insertion of two sulfur atoms into the C-6 and C-8 positions of the octanoyl moiety bound to the lipoyl domains of lipoate-dependent enzymes, thereby converting the octanoylated domains into lipoylated derivatives. This chain is Lipoyl synthase, apicoplast, found in Toxoplasma gondii.